The sequence spans 263 residues: Fructose-bisphosphate aldolase class 1 (263 aa).

Substrate contacts are provided by residues 24–25 (DH), H29, D33, and W144. Y146 (proton donor) is an active-site residue. Substrate is bound by residues R148, 177–179 (KIK), 202–204 (SGG), and 231–232 (GR). Residue K177 is the Schiff-base intermediate with dihydroxyacetone-P of the active site.

This sequence belongs to the DeoC/FbaB aldolase family. As to quaternary structure, homodecamer (dimer of pentamers).

It localises to the cytoplasm. The enzyme catalyses beta-D-fructose 1,6-bisphosphate = D-glyceraldehyde 3-phosphate + dihydroxyacetone phosphate. With respect to regulation, activated by citrate. In terms of biological role, catalyzes the reversible cleavage of fructose 1,6-bisphosphate (FBP) to glyceraldehyde 3-phosphate (GAP) and dihydroxyacetone phosphate (DHAP). The chain is Fructose-bisphosphate aldolase class 1 (fba) from Thermoproteus tenax (strain ATCC 35583 / DSM 2078 / JCM 9277 / NBRC 100435 / Kra 1).